The primary structure comprises 1054 residues: Calcium-transporting ATPase 2, endoplasmic reticulum-type (1054 aa).

The Cytoplasmic portion of the chain corresponds to 1-53 (MEEEKSFSAWSWSVEQCLKEYKTRLDKGLTSEDVQIRRQKYGFNELAKEKGKP). Residues 54 to 74 (LWHLVLEQFDDTLVKILLGAA) traverse the membrane as a helical segment. At 75-98 (FISFVLAFLGEEHGSGSGFEAFVE) the chain is on the lumenal side. A helical membrane pass occupies residues 99–118 (PFVIVLILILNAVVGVWQES). The Cytoplasmic portion of the chain corresponds to 119–262 (NAEKALEALK…ESETPLKKKL (144 aa)). A helical transmembrane segment spans residues 263-282 (DEFGSRLTTAICIVCVLVWM). At 283–312 (INYKNFVSWDVVDGYKPVNIKFSFEKCTYY) the chain is on the lumenal side. A helical membrane pass occupies residues 313-330 (FKIAVALAVAAIPEGLPA). 4 residues coordinate Ca(2+): valine 321, alanine 322, isoleucine 324, and glutamate 326. Residues 331–782 (VITTCLALGT…AEGRSIYNNM (452 aa)) lie on the Cytoplasmic side of the membrane. Aspartate 368 acts as the 4-aspartylphosphate intermediate in catalysis. Positions 727 and 731 each coordinate Mg(2+). Residues 783-802 (KAFIRYMISSNVGEVISIFL) form a helical membrane-spanning segment. Asparagine 793 and glutamate 796 together coordinate Ca(2+). The Lumenal segment spans residues 803–812 (TAALGIPECM). A helical transmembrane segment spans residues 813–833 (IPVQLLWVNLVTDGPPATALG). Positions 821, 824, and 825 each coordinate Ca(2+). At 834 to 853 (FNPADIDIMKKPPRKSDDCL) the chain is on the cytoplasmic side. A helical transmembrane segment spans residues 854–876 (IDSWVLIRYLVIGSYVGVATVGI). Residues 877-949 (FVLWYTQASF…YFTLGKVKPM (73 aa)) are Lumenal-facing. The chain crosses the membrane as a helical span at residues 950-969 (TLSLTVLVAIEMFNSLNALS). Glutamate 960 serves as a coordination point for Ca(2+). Residues 970–982 (EDNSLLTMPPWRN) are Cytoplasmic-facing. Residues 983 to 1001 (PWLLVAMTVSFALHCVILY) form a helical membrane-spanning segment. Residues 1002–1016 (VPFLANVFGIVPLSF) are Lumenal-facing. A helical membrane pass occupies residues 1017-1037 (REWFVVILVSFPVILIDEALK). Topologically, residues 1038–1054 (FIGRCRRTRIKKKIKTM) are cytoplasmic.

The protein belongs to the cation transport ATPase (P-type) (TC 3.A.3) family. Type IIA subfamily.

The protein resides in the membrane. It catalyses the reaction Ca(2+)(in) + ATP + H2O = Ca(2+)(out) + ADP + phosphate + H(+). Its function is as follows. This magnesium-dependent enzyme catalyzes the hydrolysis of ATP coupled with the translocation of calcium from the cytosol to an endomembrane compartment. In Arabidopsis thaliana (Mouse-ear cress), this protein is Calcium-transporting ATPase 2, endoplasmic reticulum-type (ECA2).